The sequence spans 402 residues: UPF0261 protein BP1203 (402 aa).

It belongs to the UPF0261 family.

The protein is UPF0261 protein BP1203 of Bordetella pertussis (strain Tohama I / ATCC BAA-589 / NCTC 13251).